The chain runs to 120 residues: Large ribosomal subunit protein uL18 (120 aa).

The interval M1–D25 is disordered. A compositionally biased stretch (basic residues) spans Q10–K21.

It belongs to the universal ribosomal protein uL18 family. Part of the 50S ribosomal subunit; part of the 5S rRNA/L5/L18/L25 subcomplex. Contacts the 5S and 23S rRNAs.

This is one of the proteins that bind and probably mediate the attachment of the 5S RNA into the large ribosomal subunit, where it forms part of the central protuberance. The chain is Large ribosomal subunit protein uL18 from Thermosynechococcus vestitus (strain NIES-2133 / IAM M-273 / BP-1).